Consider the following 591-residue polypeptide: L-fucose isomerase (591 aa).

Catalysis depends on proton acceptor residues Glu-337 and Asp-361. Mn(2+) contacts are provided by Glu-337, Asp-361, and His-528.

Belongs to the L-fucose isomerase family. In terms of assembly, homohexamer. Mn(2+) serves as cofactor.

Its subcellular location is the cytoplasm. The catalysed reaction is L-fucose = L-fuculose. Its pathway is carbohydrate degradation; L-fucose degradation; L-lactaldehyde and glycerone phosphate from L-fucose: step 1/3. Converts the aldose L-fucose into the corresponding ketose L-fuculose. The chain is L-fucose isomerase from Klebsiella pneumoniae subsp. pneumoniae (strain ATCC 700721 / MGH 78578).